We begin with the raw amino-acid sequence, 443 residues long: Transcription factor E2F2 (443 aa).

Residues Met-1–Leu-22 are disordered. A cyclin A/CDK2 binding region spans residues Ala-67–Pro-107. The DNA-binding element occupies Gly-109–Glu-198. The interval Leu-157–Leu-178 is leucine-zipper. The DEF box signature appears at Glu-162 to Glu-198. The interval Leu-199–Ile-291 is dimerization. The tract at residues Pro-306–Ser-341 is disordered. Residues Pro-361 to Asn-443 are transactivation. Residues Asp-416–Asp-433 form a retinoblastoma protein binding region.

Belongs to the E2F/DP family. Component of the DRTF1/E2F transcription factor complex. Forms heterodimers with DP family members. The E2F2 complex binds specifically hypophosphorylated retinoblastoma protein RB1. During the cell cycle, RB1 becomes phosphorylated in mid-to-late G1 phase, detaches from the DRTF1/E2F complex, rendering E2F transcriptionally active. Viral oncoproteins, notably E1A, T-antigen and HPV E7, are capable of sequestering RB protein, thus releasing the active complex. Binds EAPP. Post-translationally, phosphorylated by CDK2 and cyclin A-CDK2 in the S-phase.

It is found in the nucleus. In terms of biological role, transcription activator that binds DNA cooperatively with DP proteins through the E2 recognition site, 5'-TTTC[CG]CGC-3' found in the promoter region of a number of genes whose products are involved in cell cycle regulation or in DNA replication. The DRTF1/E2F complex functions in the control of cell-cycle progression from g1 to s phase. E2F2 binds specifically to RB1 in a cell-cycle dependent manner. The sequence is that of Transcription factor E2F2 (E2f2) from Mus musculus (Mouse).